The chain runs to 236 residues: Leucyl/phenylalanyl-tRNA--protein transferase (236 aa).

Belongs to the L/F-transferase family.

Its subcellular location is the cytoplasm. The enzyme catalyses N-terminal L-lysyl-[protein] + L-leucyl-tRNA(Leu) = N-terminal L-leucyl-L-lysyl-[protein] + tRNA(Leu) + H(+). It catalyses the reaction N-terminal L-arginyl-[protein] + L-leucyl-tRNA(Leu) = N-terminal L-leucyl-L-arginyl-[protein] + tRNA(Leu) + H(+). The catalysed reaction is L-phenylalanyl-tRNA(Phe) + an N-terminal L-alpha-aminoacyl-[protein] = an N-terminal L-phenylalanyl-L-alpha-aminoacyl-[protein] + tRNA(Phe). Functions in the N-end rule pathway of protein degradation where it conjugates Leu, Phe and, less efficiently, Met from aminoacyl-tRNAs to the N-termini of proteins containing an N-terminal arginine or lysine. This Idiomarina loihiensis (strain ATCC BAA-735 / DSM 15497 / L2-TR) protein is Leucyl/phenylalanyl-tRNA--protein transferase.